The sequence spans 125 residues: Small ribosomal subunit protein uS12m (125 aa).

Disordered regions lie at residues 1–50 (MPTL…SAPR) and 106–125 (GIPN…PKSI). The segment covering 10–23 (HGREEKRRTDRTRA) has biased composition (basic and acidic residues).

It belongs to the universal ribosomal protein uS12 family.

The protein resides in the mitochondrion. Functionally, protein S12 is involved in the translation initiation step. This Magnolia soulangeana (Saucer magnolia) protein is Small ribosomal subunit protein uS12m (RPS12).